We begin with the raw amino-acid sequence, 333 residues long: Protein APEM9 (333 aa).

The Cytoplasmic segment spans residues 1-90; the sequence is MEATDIWGEI…ELRDVFGEVA (90 aa). A helical transmembrane segment spans residues 91–102; it reads AIPVQVLLTGVC. Residues 103–268 are Peroxisomal-facing; it reads LQISNGSYLG…KVGNTQFSMS (166 aa). Residues 269–285 traverse the membrane as a helical segment; the sequence is RGKVAVSLVGLIICYAL. The Cytoplasmic segment spans residues 286 to 333; that stretch reads KRKRAALIRIIRRQMESTRKAIVDFWKLAFSYQVNPLAAIQSIPSTTT.

As to quaternary structure, interacts with PEX6 and PEX19-1, but not with PEX1. Interacts (via N-terminus) with PEX13, and (via N-terminus and C-terminus) with PEX16. As to expression, expressed in roots, leaves, stems, flowers, buds and fruits.

Its subcellular location is the peroxisome membrane. In terms of biological role, involved in peroxisome biogenesis and matrix protein import. Required for pollen maturation and in vivo germination via its role in peroxisomal function, which partially involves jasmonic acid biosynthesis. Transported to peroxisomes via the interaction with PEX19-1. Required for peroxisomal protein import by acting as an anchoring protein for the AAA ATPase complex, which consists of PEX1 and PEX6. This Arabidopsis thaliana (Mouse-ear cress) protein is Protein APEM9.